We begin with the raw amino-acid sequence, 112 residues long: T cell receptor alpha variable 34 (112 aa).

A signal peptide spans 1-21 (METVLQVLLGILGFQAAWVSS). Residues 22–112 (QELEQSPQSL…HAGIYLCGAD (91 aa)) enclose the Ig-like domain. N38 and N42 each carry an N-linked (GlcNAc...) asparagine glycan. A disulfide bond links C43 and C109.

Alpha-beta TR is a heterodimer composed of an alpha and beta chain; disulfide-linked. The alpha-beta TR is associated with the transmembrane signaling CD3 coreceptor proteins to form the TR-CD3 (TcR or TCR). The assembly of alpha-beta TR heterodimers with CD3 occurs in the endoplasmic reticulum where a single alpha-beta TR heterodimer associates with one CD3D-CD3E heterodimer, one CD3G-CD3E heterodimer and one CD247 homodimer forming a stable octameric structure. CD3D-CD3E and CD3G-CD3E heterodimers preferentially associate with TR alpha and TR beta chains, respectively. The association of the CD247 homodimer is the last step of TcR assembly in the endoplasmic reticulum and is required for transport to the cell surface.

It is found in the cell membrane. Its function is as follows. V region of the variable domain of T cell receptor (TR) alpha chain that participates in the antigen recognition. Alpha-beta T cell receptors are antigen specific receptors which are essential to the immune response and are present on the cell surface of T lymphocytes. Recognize peptide-major histocompatibility (MH) (pMH) complexes that are displayed by antigen presenting cells (APC), a prerequisite for efficient T cell adaptive immunity against pathogens. Binding of alpha-beta TR to pMH complex initiates TR-CD3 clustering on the cell surface and intracellular activation of LCK that phosphorylates the ITAM motifs of CD3G, CD3D, CD3E and CD247 enabling the recruitment of ZAP70. In turn ZAP70 phosphorylates LAT, which recruits numerous signaling molecules to form the LAT signalosome. The LAT signalosome propagates signal branching to three major signaling pathways, the calcium, the mitogen-activated protein kinase (MAPK) kinase and the nuclear factor NF-kappa-B (NF-kB) pathways, leading to the mobilization of transcription factors that are critical for gene expression and essential for T cell growth and differentiation. The T cell repertoire is generated in the thymus, by V-(D)-J rearrangement. This repertoire is then shaped by intrathymic selection events to generate a peripheral T cell pool of self-MH restricted, non-autoaggressive T cells. Post-thymic interaction of alpha-beta TR with the pMH complexes shapes TR structural and functional avidity. This Homo sapiens (Human) protein is T cell receptor alpha variable 34.